Reading from the N-terminus, the 172-residue chain is Ribosome maturation factor RimM (172 aa).

One can recognise a PRC barrel domain in the interval 95-168 (AEGEFYYHQI…RVDVEIMEGL (74 aa)).

Belongs to the RimM family. As to quaternary structure, binds ribosomal protein uS19.

The protein localises to the cytoplasm. Functionally, an accessory protein needed during the final step in the assembly of 30S ribosomal subunit, possibly for assembly of the head region. Essential for efficient processing of 16S rRNA. May be needed both before and after RbfA during the maturation of 16S rRNA. It has affinity for free ribosomal 30S subunits but not for 70S ribosomes. The chain is Ribosome maturation factor RimM from Streptococcus equi subsp. zooepidemicus (strain H70).